The primary structure comprises 1096 residues: Lysine-specific demethylase 4B (1096 aa).

The region spanning 15–57 (IMTFRPTMEEFKDFNKYVAYIESQGAHRAGLAKIIPPKEWKPR) is the JmjN domain. Tyr133 contributes to the 2-oxoglutarate binding site. Residues 146–309 (VAQWNIGSLR…YGKVATQCTC (164 aa)) form the JmjC domain. Positions 189 and 191 each coordinate Fe cation. Positions 199 and 207 each coordinate 2-oxoglutarate. Residues Cys235 and His241 each contribute to the Zn(2+) site. Lys242 lines the 2-oxoglutarate pocket. His277 provides a ligand contact to Fe cation. Zn(2+)-binding residues include Cys307 and Cys309. The segment covering 369–382 (LLRRSHRKRSQPKK) has biased composition (basic residues). 2 disordered regions span residues 369-478 (LLRR…SEEA) and 557-649 (KGPT…VSDP). The span at 391-406 (PGEGTAGAALLEEAGG) shows a compositional bias: low complexity. A compositionally biased stretch (acidic residues) spans 413–425 (GPEVDPEEEEEEP). The segment covering 430–443 (HGREAEGAEEDGRG) has biased composition (basic and acidic residues). Residues 444 to 458 (KLRPTKAKSERKKKS) are compositionally biased toward basic residues. Residue Ser566 is modified to Phosphoserine. Residue Lys602 is modified to N6-acetyllysine. Residues 632-648 (SSDEEASPFSGEEDVSD) show a composition bias toward acidic residues. The PHD-type 1 zinc-finger motif lies at 731 to 789 (MCFTSGGENTEPLPANSYIGDDGTSPLIACGKCCLQVHASCYGIRPELVNEGWTCSRCA). The C2HC pre-PHD-type zinc-finger motif lies at 794–827 (TAECCLCNLRGGALQMTTDRRWIHVICAIAVPEA). The segment at 850–907 (LKCVYCRKRMKKVSGACIQCSYEHCSTSFHVTCAHAAGVLMEPDDWPYVVSITCLKHK) adopts a PHD-type 2 zinc-finger fold. Tudor domains follow at residues 917-974 (RAVS…CVQL) and 975-1031 (GPPS…EELP). A disordered region spans residues 1037 to 1073 (RLSLSTGAPQEPAFSGEEAKAAKRPRVGTPLATEDSG). Thr1065 is modified (phosphothreonine).

It belongs to the JHDM3 histone demethylase family. Fe(2+) is required as a cofactor.

The protein localises to the nucleus. The catalysed reaction is N(6),N(6),N(6)-trimethyl-L-lysyl(9)-[histone H3] + 2 2-oxoglutarate + 2 O2 = N(6)-methyl-L-lysyl(9)-[histone H3] + 2 formaldehyde + 2 succinate + 2 CO2. Histone demethylase that specifically demethylates 'Lys-9' of histone H3, thereby playing a role in histone code. Does not demethylate histone H3 'Lys-4', H3 'Lys-27', H3 'Lys-36' nor H4 'Lys-20'. Only able to demethylate trimethylated H3 'Lys-9', with a weaker activity than KDM4A, KDM4C and KDM4D. Demethylation of Lys residue generates formaldehyde and succinate. Plays a critical role in the development of the central nervous system (CNS). The protein is Lysine-specific demethylase 4B (KDM4B) of Homo sapiens (Human).